The chain runs to 134 residues: Transmembrane protein 100 (134 aa).

The tract at residues 1–23 (MTEESTKENLGAPKSPTPVTMEK) is disordered. Ser15 is subject to Phosphoserine. The next 2 helical transmembrane spans lie at 56 to 76 (CIIP…AVAY) and 84 to 104 (IISI…ASSA). Ser121 bears the Phosphoserine mark.

In terms of assembly, interacts (via C-terminus) with TRPA1 and TRPV1. Interacts with TASOR. Expressed in dorsal root ganglia. Expressed in neurons as well as nerve fiber bundles connecting ganglia and fibers innervating muscle layer of the gastric body, jejunum, and proximal colon. Expressed in arterial endothelial cells and neurons of the central nervous system and peripheral nervous system (at protein level). Expressed strongly in lung, weakly in brain, heart and muscle. Expressed in enteric neurons and vascular tissue in the muscularis propria of the gastrointestinal tract.

It is found in the cell membrane. The protein resides in the membrane. Its subcellular location is the perikaryon. The protein localises to the cytoplasm. It localises to the perinuclear region. It is found in the endoplasmic reticulum. Its function is as follows. Plays a role during embryonic arterial endothelium differentiation and vascular morphogenesis through the ACVRL1 receptor-dependent signaling pathway upon stimulation by bone morphogenetic proteins, such as GDF2/BMP9 and BMP10. Involved in the regulation of nociception, acting as a modulator of the interaction between TRPA1 and TRPV1, two molecular sensors and mediators of pain signals in dorsal root ganglia (DRG) neurons. Mechanistically, it weakens their interaction, thereby releasing the inhibition of TRPA1 by TRPV1 and increasing the single-channel open probability of the TRPA1-TRPV1 complex. This Mus musculus (Mouse) protein is Transmembrane protein 100 (Tmem100).